Here is a 180-residue protein sequence, read N- to C-terminus: uncharacterized protein (180 aa).

Positions 35-163 constitute a Nudix hydrolase domain; it reads LRHRATYIVV…TPDSLKALAL (129 aa). A Nudix box motif is present at residues 72 to 94; sequence GGVVQADEQLLESARREAEEELG. Residues E88 and E92 each contribute to the Mg(2+) site.

The protein belongs to the Nudix hydrolase family. The cofactor is Mg(2+).

This is an uncharacterized protein from Escherichia coli O157:H7.